A 407-amino-acid polypeptide reads, in one-letter code: Shaggy-related protein kinase iota (407 aa).

Positions 1–19 (MASLPLGPQPHALAPPLQL) are enriched in low complexity. Residues 1 to 23 (MASLPLGPQPHALAPPLQLHDGD) form a disordered region. A2 bears the N-acetylalanine mark. Positions 70–354 (YMAERVVGTG…ALEACAHPFF (285 aa)) constitute a Protein kinase domain. Residues 76-84 (VGTGSFGIV) and K99 each bind ATP. D195 (proton acceptor) is an active-site residue. Y230 carries the phosphotyrosine modification.

The protein belongs to the protein kinase superfamily. CMGC Ser/Thr protein kinase family. GSK-3 subfamily. In terms of assembly, binds to KIB1. Interacts with BSK6. Post-translationally, autophosphorylated mainly on threonine and serine residues.

It carries out the reaction L-seryl-[protein] + ATP = O-phospho-L-seryl-[protein] + ADP + H(+). It catalyses the reaction L-threonyl-[protein] + ATP = O-phospho-L-threonyl-[protein] + ADP + H(+). Phosphorylates BSK1, BSK3, BSK5, BSK6, BSK8 and BSK11 in vitro. May mediate extracellular signals to regulate transcription in differentiating cells. In Arabidopsis thaliana (Mouse-ear cress), this protein is Shaggy-related protein kinase iota (ASK9).